The following is a 67-amino-acid chain: DNA-directed RNA polymerase subunit omega (67 aa).

It belongs to the RNA polymerase subunit omega family. The RNAP catalytic core consists of 2 alpha, 1 beta, 1 beta' and 1 omega subunit. When a sigma factor is associated with the core the holoenzyme is formed, which can initiate transcription.

The catalysed reaction is RNA(n) + a ribonucleoside 5'-triphosphate = RNA(n+1) + diphosphate. In terms of biological role, promotes RNA polymerase assembly. Latches the N- and C-terminal regions of the beta' subunit thereby facilitating its interaction with the beta and alpha subunits. The chain is DNA-directed RNA polymerase subunit omega from Burkholderia pseudomallei (strain 1106a).